The following is a 249-amino-acid chain: Indole-3-glycerol phosphate synthase (249 aa).

This sequence belongs to the TrpC family.

The enzyme catalyses 1-(2-carboxyphenylamino)-1-deoxy-D-ribulose 5-phosphate + H(+) = (1S,2R)-1-C-(indol-3-yl)glycerol 3-phosphate + CO2 + H2O. It functions in the pathway amino-acid biosynthesis; L-tryptophan biosynthesis; L-tryptophan from chorismate: step 4/5. The sequence is that of Indole-3-glycerol phosphate synthase from Pyrobaculum arsenaticum (strain DSM 13514 / JCM 11321 / PZ6).